We begin with the raw amino-acid sequence, 66 residues long: Large ribosomal subunit protein bL35 (66 aa).

Residues H24 to R43 show a composition bias toward basic residues. The segment at H24–L44 is disordered.

It belongs to the bacterial ribosomal protein bL35 family.

This is Large ribosomal subunit protein bL35 from Dictyoglomus thermophilum (strain ATCC 35947 / DSM 3960 / H-6-12).